The sequence spans 401 residues: Probable cysteine desulfurase (401 aa).

Lys223 is modified (N6-(pyridoxal phosphate)lysine).

The protein belongs to the class-V pyridoxal-phosphate-dependent aminotransferase family. Csd subfamily. It depends on pyridoxal 5'-phosphate as a cofactor.

It catalyses the reaction (sulfur carrier)-H + L-cysteine = (sulfur carrier)-SH + L-alanine. In terms of biological role, catalyzes the removal of elemental sulfur and selenium atoms from L-cysteine, L-cystine, L-selenocysteine, and L-selenocystine to produce L-alanine. This is Probable cysteine desulfurase (csdA) from Pseudomonas putida (strain ATCC 47054 / DSM 6125 / CFBP 8728 / NCIMB 11950 / KT2440).